The primary structure comprises 629 residues: Flap endonuclease GEN-like 1 (629 aa).

The segment at 1 to 87 (MGVGGSFWDL…DGQPSPLKSQ (87 aa)) is N-domain. The tract at residues 2-98 (GVGGSFWDLL…RAARFFRGSG (97 aa)) is XPG-N domain. Residues Asp31, Asp78, Glu148, Glu150, Asp169, Asp171, and Asp221 each coordinate Mg(2+). The segment at 136-221 (EYLGMPVLRA…VAMALLVGSD (86 aa)) is XPG-I domain. The tract at residues 136–225 (EYLGMPVLRA…LLVGSDHDLH (90 aa)) is I-domain. The interval 221 to 421 (DHDLHGVPGF…MLPMLSTIYL (201 aa)) is 5'-3' exonuclease domain. A disordered region spans residues 594–617 (KKGLSGDSGKDGSRKSSDVDLSKN). Residues 601–614 (SGKDGSRKSSDVDL) are compositionally biased toward basic and acidic residues.

The protein belongs to the XPG/RAD2 endonuclease family. GEN subfamily. Monomer. Interacts with PCNA. PCNA stimulates the nuclease activity without altering cleavage specificity. Mg(2+) serves as cofactor. As to expression, highly expressed in anthers. Expressed in roots and leaves.

The protein localises to the nucleus. Functionally, endonuclease which cleaves flap structures at the junction between single-stranded DNA and double-stranded DNA. Possesses both single-stranded and double-stranded DNA-binding activities. Involved in early microspore development, but does not alter meiosis or tapetal cells development. Possesses Holliday junction (HJ) resolvase activity in vitro. Cleaves HJ at symmetrically related sites of the branch point. This Oryza sativa subsp. japonica (Rice) protein is Flap endonuclease GEN-like 1.